The chain runs to 112 residues: Divalent-cation tolerance protein CutA (112 aa).

The Cu cation site is built by Cys16, His83, and His84.

Belongs to the CutA family. Homotrimer. The cofactor is Cu cation.

The protein localises to the cytoplasm. Involved in resistance toward heavy metals. This is Divalent-cation tolerance protein CutA from Shigella flexneri.